The chain runs to 202 residues: Protein GrpE (202 aa).

Residues methionine 1–threonine 14 are compositionally biased toward polar residues. The tract at residues methionine 1–leucine 58 is disordered. Positions arginine 21–leucine 58 are enriched in low complexity.

It belongs to the GrpE family. As to quaternary structure, homodimer.

The protein resides in the cytoplasm. In terms of biological role, participates actively in the response to hyperosmotic and heat shock by preventing the aggregation of stress-denatured proteins, in association with DnaK and GrpE. It is the nucleotide exchange factor for DnaK and may function as a thermosensor. Unfolded proteins bind initially to DnaJ; upon interaction with the DnaJ-bound protein, DnaK hydrolyzes its bound ATP, resulting in the formation of a stable complex. GrpE releases ADP from DnaK; ATP binding to DnaK triggers the release of the substrate protein, thus completing the reaction cycle. Several rounds of ATP-dependent interactions between DnaJ, DnaK and GrpE are required for fully efficient folding. This chain is Protein GrpE, found in Paraburkholderia phymatum (strain DSM 17167 / CIP 108236 / LMG 21445 / STM815) (Burkholderia phymatum).